The primary structure comprises 177 residues: ATP synthase subunit delta (177 aa).

This sequence belongs to the ATPase delta chain family. F-type ATPases have 2 components, F(1) - the catalytic core - and F(0) - the membrane proton channel. F(1) has five subunits: alpha(3), beta(3), gamma(1), delta(1), epsilon(1). F(0) has three main subunits: a(1), b(2) and c(10-14). The alpha and beta chains form an alternating ring which encloses part of the gamma chain. F(1) is attached to F(0) by a central stalk formed by the gamma and epsilon chains, while a peripheral stalk is formed by the delta and b chains.

The protein resides in the cell inner membrane. In terms of biological role, f(1)F(0) ATP synthase produces ATP from ADP in the presence of a proton or sodium gradient. F-type ATPases consist of two structural domains, F(1) containing the extramembraneous catalytic core and F(0) containing the membrane proton channel, linked together by a central stalk and a peripheral stalk. During catalysis, ATP synthesis in the catalytic domain of F(1) is coupled via a rotary mechanism of the central stalk subunits to proton translocation. Functionally, this protein is part of the stalk that links CF(0) to CF(1). It either transmits conformational changes from CF(0) to CF(1) or is implicated in proton conduction. This is ATP synthase subunit delta from Pasteurella multocida (strain Pm70).